The following is a 490-amino-acid chain: GTPase Der (490 aa).

2 consecutive EngA-type G domains span residues 3-166 (PVVA…MEDL) and 203-376 (IKLA…DSST). GTP contacts are provided by residues 9-16 (GRPNVGKS), 56-60 (DTGGI), 118-121 (NKTD), 209-216 (GRPNVGKS), 256-260 (DTAGV), and 321-324 (NKWD). Residues 377-461 (RRVGTSMLTR…PIRIQFKEGE (85 aa)) enclose the KH-like domain.

It belongs to the TRAFAC class TrmE-Era-EngA-EngB-Septin-like GTPase superfamily. EngA (Der) GTPase family. As to quaternary structure, associates with the 50S ribosomal subunit.

Functionally, GTPase that plays an essential role in the late steps of ribosome biogenesis. The protein is GTPase Der of Shigella flexneri serotype 5b (strain 8401).